The chain runs to 119 residues: Ribosome-binding factor A (119 aa).

It belongs to the RbfA family. As to quaternary structure, monomer. Binds 30S ribosomal subunits, but not 50S ribosomal subunits or 70S ribosomes.

Its subcellular location is the cytoplasm. Its function is as follows. One of several proteins that assist in the late maturation steps of the functional core of the 30S ribosomal subunit. Associates with free 30S ribosomal subunits (but not with 30S subunits that are part of 70S ribosomes or polysomes). Required for efficient processing of 16S rRNA. May interact with the 5'-terminal helix region of 16S rRNA. In Buchnera aphidicola subsp. Baizongia pistaciae (strain Bp), this protein is Ribosome-binding factor A.